The primary structure comprises 208 residues: Large ribosomal subunit protein bL25 (208 aa).

The segment at 184–208 (VTISGTSSDQDTSGGESSGTTTSED) is disordered. The segment covering 187–208 (SGTSSDQDTSGGESSGTTTSED) has biased composition (low complexity).

The protein belongs to the bacterial ribosomal protein bL25 family. CTC subfamily. In terms of assembly, part of the 50S ribosomal subunit; part of the 5S rRNA/L5/L18/L25 subcomplex. Contacts the 5S rRNA. Binds to the 5S rRNA independently of L5 and L18.

This is one of the proteins that binds to the 5S RNA in the ribosome where it forms part of the central protuberance. This Ehrlichia ruminantium (strain Gardel) protein is Large ribosomal subunit protein bL25.